Reading from the N-terminus, the 493-residue chain is Glutamyl-tRNA(Gln) amidotransferase subunit A (493 aa).

Residues K78 and S159 each act as charge relay system in the active site. Catalysis depends on S183, which acts as the Acyl-ester intermediate.

It belongs to the amidase family. GatA subfamily. Heterotrimer of A, B and C subunits.

It carries out the reaction L-glutamyl-tRNA(Gln) + L-glutamine + ATP + H2O = L-glutaminyl-tRNA(Gln) + L-glutamate + ADP + phosphate + H(+). Allows the formation of correctly charged Gln-tRNA(Gln) through the transamidation of misacylated Glu-tRNA(Gln) in organisms which lack glutaminyl-tRNA synthetase. The reaction takes place in the presence of glutamine and ATP through an activated gamma-phospho-Glu-tRNA(Gln). The chain is Glutamyl-tRNA(Gln) amidotransferase subunit A from Sphingopyxis alaskensis (strain DSM 13593 / LMG 18877 / RB2256) (Sphingomonas alaskensis).